The primary structure comprises 875 residues: Cytosolic phospholipase A2 epsilon (875 aa).

Positions 16-70 (THASEGHHGLGTSMLVPKNPQGEEDSKLGRNCSGFEDAQDPQTAVPSSPLLSMAS) are disordered. The 124-residue stretch at 60 to 183 (VPSSPLLSMA…CLRNKTHVKF (124 aa)) folds into the C2 domain. Over residues 61 to 70 (PSSPLLSMAS) the composition is skewed to low complexity. The Ca(2+) site is built by aspartate 97, aspartate 103, aspartate 153, aspartate 155, and aspartate 161. Residues 332–875 (PCSDTLDVRL…KKRMRSQCPS (544 aa)) form the PLA2c domain. Serine 420 acts as the Nucleophile in catalysis. The active-site Proton acceptor is the aspartate 708. A Phosphoserine modification is found at serine 808. The required for localization at membrane structures stretch occupies residues 865–875 (EKKRMRSQCPS).

It depends on Ca(2+) as a cofactor. As to expression, predominantly expressed in brain, heart, skeletal muscle, testis and thyroid. Expressed in neurons but not astrocytes or microglia. Expressed at lower level in stomach.

Its subcellular location is the cytoplasm. It is found in the cytosol. It localises to the early endosome membrane. The protein resides in the lysosome membrane. The protein localises to the cell membrane. The enzyme catalyses a 1,2-diacyl-sn-glycero-3-phosphoethanolamine + a 1,2-diacyl-sn-glycero-3-phosphocholine = an N-acyl-1,2-diacyl-sn-glycero-3-phosphoethanolamine + a 2-acyl-sn-glycero-3-phosphocholine + H(+). It catalyses the reaction 1-hexadecanoyl-2-octadecanoyl-sn-glycero-3-phosphocholine + 1,2-di-(9Z-octadecenoyl)-sn-glycero-3-phosphoethanolamine = 2-octadecanoyl-sn-glycero-3-phosphocholine + N-hexadecanoyl-1,2-di-(9Z-octadecenoyl)-sn-glycero-3-phosphoethanolamine + H(+). The catalysed reaction is 1-octadecanoyl-2-hexadecanoyl-sn-glycero-3-phosphocholine + 1,2-di-(9Z-octadecenoyl)-sn-glycero-3-phosphoethanolamine = N-octadecanoyl-1,2-di-(9Z-octadecenoyl)-sn-glycero-3-phosphoethanolamine + 2-hexadecanoyl-sn-glycero-3-phosphocholine + H(+). It carries out the reaction 1,2-di-(9Z-octadecenoyl)-sn-glycero-3-phosphoethanolamine + 1,2-dihexadecanoyl-sn-glycero-3-phosphocholine = N-hexadecanoyl-1,2-di-(9Z-octadecenoyl)-sn-glycero-3-phosphoethanolamine + 2-hexadecanoyl-sn-glycero-3-phosphocholine + H(+). The enzyme catalyses 1,2-di-(5Z,8Z,11Z,14Z-eicosatetraenoyl)-sn-glycero-3-phosphocholine + 1,2-di-(9Z-octadecenoyl)-sn-glycero-3-phosphoethanolamine = N-(5Z,8Z,11Z,14Z-eicosatetraenoyl)-1,2-di-(9Z-octadecenoyl)-sn-glycero-3-phosphoethanolamine + 2-(5Z,8Z,11Z,14Z)-eicosatetraenoyl-sn-glycero-3-phosphocholine + H(+). It catalyses the reaction 2 1,2-di-(9Z-octadecenoyl)-sn-glycero-3-phosphoethanolamine = N,1,2-tri-(9Z-octadecenoyl)-sn-glycero-3-phosphoethanolamine + 2-(9Z-octadecenoyl)-sn-glycero-3-phosphoethanolamine + H(+). The catalysed reaction is a 1,2-diacyl-sn-glycero-3-phosphocholine + H2O = a 1-acyl-sn-glycero-3-phosphocholine + a fatty acid + H(+). It carries out the reaction 1-(1Z-octadecenyl)-2-(9Z-octadecenoyl)-sn-glycero-3-phosphoethanolamine + 1,2-dihexadecanoyl-sn-glycero-3-phosphocholine = 1-O-(1Z-octadecenoyl)-2-(9Z-octadecenoyl)-sn-glycero-3-phospho-N-hexadecanoyl-ethanolamine + 2-hexadecanoyl-sn-glycero-3-phosphocholine + H(+). The enzyme catalyses 1-hexadecanoyl-2-(5Z,8Z,11Z,14Z-eicosatetraenoyl)-sn-glycero-3-phosphocholine + H2O = 1-hexadecanoyl-sn-glycero-3-phosphocholine + (5Z,8Z,11Z,14Z)-eicosatetraenoate + H(+). It catalyses the reaction 1-hexadecanoyl-sn-glycero-3-phosphocholine + H2O = sn-glycerol 3-phosphocholine + hexadecanoate + H(+). With respect to regulation, stimulated by cytosolic Ca(2+). Stimulated by anionic phospholipids such as phosphatidylserine. In terms of biological role, calcium-dependent N-acyltransferase involved in the biosynthesis of N-acyl ethanolamines (NAEs) in the brain. Transfers the sn-1 fatty acyl chain of phosphatidylcholine (fatty acyl donor) to the amine group of phosphatidylethanolamine (fatty acyl acceptor) to generate N-acyl phosphatidylethanolamine (NAPE). Similarly can use plasmenylethanolamine as a fatty acyl acceptor to form N-acyl plasmenylethanolamine (N-Acyl-PlsEt). Both NAPE and N-Acyl-PlsEt can serve as precursors of bioactive NAEs like N-arachidonoyl phosphatidylethanolamine also called anandamide. Has weak phospholipase A2 and lysophospholipase activities. Regulates intracellular membrane trafficking that requires modulation of membrane curvature as it occurs by enrichment in lysophospholipids. Promotes tubule formation involved in clathrin-independent endocytotic trafficking and cargo recycling. In Mus musculus (Mouse), this protein is Cytosolic phospholipase A2 epsilon (Pla2g4e).